The following is a 230-amino-acid chain: uncharacterized protein (230 aa).

Residues 118–195 (LLDEILPKEP…SKREMERLER (78 aa)) are disordered. Basic residues predominate over residues 136-146 (QKKKEKRAALK). Basic and acidic residues-rich tracts occupy residues 160 to 170 (ETDLYGDRDSF) and 179 to 195 (QRSE…RLER).

This is an uncharacterized protein from Schizosaccharomyces pombe (strain 972 / ATCC 24843) (Fission yeast).